Reading from the N-terminus, the 141-residue chain is Ribonuclease P protein component (141 aa).

A compositionally biased stretch (basic and acidic residues) spans 114–134 (RRIKAKGERRGDGKRRTERPE). Residues 114–141 (RRIKAKGERRGDGKRRTERPESGPVNGK) are disordered.

Belongs to the RnpA family. Consists of a catalytic RNA component (M1 or rnpB) and a protein subunit.

The enzyme catalyses Endonucleolytic cleavage of RNA, removing 5'-extranucleotides from tRNA precursor.. Functionally, RNaseP catalyzes the removal of the 5'-leader sequence from pre-tRNA to produce the mature 5'-terminus. It can also cleave other RNA substrates such as 4.5S RNA. The protein component plays an auxiliary but essential role in vivo by binding to the 5'-leader sequence and broadening the substrate specificity of the ribozyme. This chain is Ribonuclease P protein component, found in Brucella anthropi (strain ATCC 49188 / DSM 6882 / CCUG 24695 / JCM 21032 / LMG 3331 / NBRC 15819 / NCTC 12168 / Alc 37) (Ochrobactrum anthropi).